Consider the following 718-residue polypeptide: Fatty acid oxidation complex subunit alpha (718 aa).

An enoyl-CoA hydratase/isomerase region spans residues 1-188 (MIYQGESIRV…KVGAVDAVVE (188 aa)). Substrate is bound at residue Asp295. Residues 310–718 (TKEIKTAGVL…KSYFDTTSAK (409 aa)) form a 3-hydroxyacyl-CoA dehydrogenase region. Residues Met324, Asp343, 400-402 (VVE), Lys407, and Ser429 each bind NAD(+). His450 (for 3-hydroxyacyl-CoA dehydrogenase activity) is an active-site residue. Asn453 contributes to the NAD(+) binding site. Asn500 and Tyr658 together coordinate substrate.

This sequence in the N-terminal section; belongs to the enoyl-CoA hydratase/isomerase family. The protein in the C-terminal section; belongs to the 3-hydroxyacyl-CoA dehydrogenase family. As to quaternary structure, heterotetramer of two alpha chains (FadB) and two beta chains (FadA).

The catalysed reaction is a (3S)-3-hydroxyacyl-CoA + NAD(+) = a 3-oxoacyl-CoA + NADH + H(+). It carries out the reaction a (3S)-3-hydroxyacyl-CoA = a (2E)-enoyl-CoA + H2O. The enzyme catalyses a 4-saturated-(3S)-3-hydroxyacyl-CoA = a (3E)-enoyl-CoA + H2O. It catalyses the reaction (3S)-3-hydroxybutanoyl-CoA = (3R)-3-hydroxybutanoyl-CoA. The catalysed reaction is a (3Z)-enoyl-CoA = a 4-saturated (2E)-enoyl-CoA. It carries out the reaction a (3E)-enoyl-CoA = a 4-saturated (2E)-enoyl-CoA. Its pathway is lipid metabolism; fatty acid beta-oxidation. Its function is as follows. Involved in the aerobic and anaerobic degradation of long-chain fatty acids via beta-oxidation cycle. Catalyzes the formation of 3-oxoacyl-CoA from enoyl-CoA via L-3-hydroxyacyl-CoA. It can also use D-3-hydroxyacyl-CoA and cis-3-enoyl-CoA as substrate. This Idiomarina loihiensis (strain ATCC BAA-735 / DSM 15497 / L2-TR) protein is Fatty acid oxidation complex subunit alpha.